The following is a 319-amino-acid chain: Replication factor C small subunit 2 (319 aa).

44 to 51 lines the ATP pocket; it reads GPPGTGKT.

This sequence belongs to the activator 1 small subunits family. RfcS subfamily. In terms of assembly, heteromultimer composed of small subunits (RfcS) and large subunits (RfcL).

In terms of biological role, part of the RFC clamp loader complex which loads the PCNA sliding clamp onto DNA. The protein is Replication factor C small subunit 2 of Pyrobaculum aerophilum (strain ATCC 51768 / DSM 7523 / JCM 9630 / CIP 104966 / NBRC 100827 / IM2).